A 150-amino-acid polypeptide reads, in one-letter code: MKVIFLQDVKGKGKKGEVKEVPTGYAQNFLLKKNLAKEATTQAIGELKGKQKSEEKAQAEILAQAKELKTQLESETTRVQFIEKVGPDGRTFGSITAKKIAEELQKQYGIKIDKRHIDLDHTIRAIGKVEVPVKLHKQVSSQIKLDIKEA.

Belongs to the bacterial ribosomal protein bL9 family.

In terms of biological role, binds to the 23S rRNA. The polypeptide is Large ribosomal subunit protein bL9 (Streptococcus agalactiae serotype III (strain NEM316)).